The sequence spans 479 residues: MDTAQVFALFYMATVMAAGTKNKASQAVSDPCSEIHFDEQLANYFENEVSAATTQLDENQNFERSWKLLQYLQMDHQKSKGAAALAAYASTINIRTAANVKAASGELLTAASLLRQRAANVSAAFQLQGQGVIKLGTPDIDNGAKSITHADAGCNYAAISKTVPTQRCTPPQQQADTITAADMQPDKLDELQLITEAYTTTITIAASAYSKGTPATGHTVYTYGNCQSTGGSASAQLGDTHALGIHVKTIGTKAVTEKTTLQPSSSNKCPDEGTTAELTPIKRLARAICLARKASLAKPKALSRLQYSDLQTDTDFKRIAAIFLSRNGKQLDPEKDSQEINELIKETYGPNEEHFHKSYVEALDNKKWEFKIKESKIEGTVNALANGVDAGLATAYYASKRQSTCGQAAADTPIVSSDVEKCKGKTQDDCRTADECEMRDGECNAKVAKTAEPDSKTNTTGNNSFAIKTSTLLLAVLLF.

An N-terminal signal peptide occupies residues 1–12; it reads MDTAQVFALFYM. 2 N-linked (GlcNAc...) asparagine glycosylation sites follow: Asn120 and Asn458. Residue Asn462 is the site of GPI-anchor amidated asparagine attachment. Positions 463-479 are cleaved as a propeptide — removed in mature form; it reads NSFAIKTSTLLLAVLLF.

The protein localises to the cell membrane. Its function is as follows. VSG forms a coat on the surface of the parasite. The trypanosome evades the immune response of the host by expressing a series of antigenically distinct VSGs from an estimated 1000 VSG genes. The sequence is that of Variant surface glycoprotein ILTAT 1.22 from Trypanosoma brucei brucei.